Reading from the N-terminus, the 402-residue chain is Beta sliding clamp (402 aa).

Belongs to the beta sliding clamp family. In terms of assembly, forms a ring-shaped head-to-tail homodimer around DNA which binds and tethers DNA polymerases and other proteins to the DNA. The DNA replisome complex has a single clamp-loading complex (3 tau and 1 each of delta, delta', psi and chi subunits) which binds 3 Pol III cores (1 core on the leading strand and 2 on the lagging strand) each with a beta sliding clamp dimer. Additional proteins in the replisome are other copies of gamma, psi and chi, Ssb, DNA helicase and RNA primase.

Its subcellular location is the cytoplasm. Functionally, confers DNA tethering and processivity to DNA polymerases and other proteins. Acts as a clamp, forming a ring around DNA (a reaction catalyzed by the clamp-loading complex) which diffuses in an ATP-independent manner freely and bidirectionally along dsDNA. Initially characterized for its ability to contact the catalytic subunit of DNA polymerase III (Pol III), a complex, multichain enzyme responsible for most of the replicative synthesis in bacteria; Pol III exhibits 3'-5' exonuclease proofreading activity. The beta chain is required for initiation of replication as well as for processivity of DNA replication. This Mycobacterium bovis (strain ATCC BAA-935 / AF2122/97) protein is Beta sliding clamp (dnaN).